The primary structure comprises 4171 residues: Cytoplasmic dynein 2 heavy chain 1 (4171 aa).

The segment at Met-1–Glu-1598 is stem. An ATP-binding site is contributed by Gly-115 to Asn-122. 5 coiled-coil regions span residues Ala-164–Leu-203, Lys-629–Glu-693, Asp-829–Leu-861, Glu-927–Arg-1048, and Ser-1354–Lys-1383. AAA stretches follow at residues Tyr-1599 to Gly-1823, Glu-1883 to His-2100, Val-2184 to Ser-2432, and Arg-2527 to Tyr-2767. Residues Gly-1637 to Thr-1644, Gly-1921 to Ser-1928, Gly-2226 to Gln-2233, and Gly-2565 to Arg-2572 each bind ATP. The segment at Gln-2776–Ile-3064 is stalk. 3 coiled-coil regions span residues Glu-2790–Gln-2877, Glu-2999–Arg-3059, and Glu-3308–Gln-3336. AAA stretches follow at residues Ala-3140–Lys-3367 and Leu-3575–Gln-3784.

The protein belongs to the dynein heavy chain family. The cytoplasmic dynein complex 2 is probably composed by a heavy chain che-3 homodimer and a number of light intermediate chains.

It localises to the cell projection. The protein resides in the cilium membrane. It is found in the cytoplasm. Its subcellular location is the cytoskeleton. Functionally, functions as a motor for intraflagellar retrograde transport in chemosensory neurons. Functions in cilia biogenesis. The polypeptide is Cytoplasmic dynein 2 heavy chain 1 (Caenorhabditis elegans).